Here is a 707-residue protein sequence, read N- to C-terminus: Transcription factor 12 (707 aa).

The interval 25-109 is disordered; it reads AMFSPPVNSG…TPFMNSNLIG (85 aa). Polar residues-rich tracts occupy residues 30–48 and 56–76; these read PVNSGKTRPTTLGSSQFSG and GTTSWGTSGQPSPSYDSSRGF. 3 positions are modified to phosphoserine: Ser47, Ser67, and Ser79. The segment covering 81 to 93 has biased composition (basic and acidic residues); it reads HYSDHLNDSRLGT. The residue at position 98 (Ser98) is a Phosphoserine. Residue Lys110 forms a Glycyl lysine isopeptide (Lys-Gly) (interchain with G-Cter in SUMO2) linkage. Phosphoserine occurs at positions 116 and 124. Residues 119–140 are leucine-zipper; the sequence is LYSRDSGLSGCQSSLLRQDLGL. Disordered stretches follow at residues 140 to 222 and 249 to 313; these read LGSP…SMFA and FGGI…ASHT. A compositionally biased stretch (polar residues) spans 144–163; that stretch reads AQLSSSGKPGTPYYSFSATS. Lys181 is covalently cross-linked (Glycyl lysine isopeptide (Lys-Gly) (interchain with G-Cter in SUMO2)). The span at 256 to 269 shows a compositional bias: low complexity; sequence STSHMSQSSSYGSL. A compositionally biased stretch (polar residues) spans 282–306; the sequence is VSPTDINTSLPPMSSFHRGSTSSSP. Thr313 is modified (phosphothreonine). The residue at position 333 (Ser333) is a Phosphoserine. 2 disordered regions span residues 349–393 and 521–605; these read PDHT…YENS and HKTP…ERRM. A compositionally biased stretch (low complexity) spans 352 to 363; it reads TSSSFPSNPSTP. Polar residues-rich tracts occupy residues 364 to 377 and 384 to 393; these read VGSPSPLTAGTSQW and APSSPSYENS. 2 stretches are compositionally biased toward basic and acidic residues: residues 543-555 and 561-576; these read IKTENKEKDENLH and DDMKSDDESSQKDIKV. A Glycyl lysine isopeptide (Lys-Gly) (interchain with G-Cter in SUMO2) cross-link involves residue Lys544. Residue Ser565 is modified to Phosphoserine. Residue Lys575 forms a Glycyl lysine isopeptide (Lys-Gly) (interchain with G-Cter in SUMO2) linkage. Phosphothreonine is present on Thr582. Phosphoserine occurs at positions 583 and 584. Over residues 593–605 the composition is skewed to basic and acidic residues; the sequence is PEQKIEREKERRM. The bHLH domain maps to 602–655; it reads ERRMANNARERLRVRDINEAFKELGRMCQLHLKSEKPQTKLLILHQAVAVILSL. Glycyl lysine isopeptide (Lys-Gly) (interchain with G-Cter in SUMO2) cross-links involve residues Lys634 and Lys678. The interval 657 to 680 is class A specific domain; the sequence is QQVRERNLNPKAACLKRREEEKVS. Residues 675-707 are disordered; sequence EEEKVSAASAEPPTTLPGTHPGLSETTNPMGHL. The span at 686-697 shows a compositional bias: low complexity; that stretch reads PPTTLPGTHPGL. Over residues 698–707 the composition is skewed to polar residues; it reads SETTNPMGHL.

Efficient DNA binding requires dimerization with another bHLH protein. Forms homo- or heterooligomers with myogenin, E12 and ITF2 proteins. Interacts with PTF1. Interacts with RUNX1T1. Interacts with NEUROD2. Interacts with BHLHA9. In terms of tissue distribution, isoform gamma is highly expressed in lung, kidney, spleen, and is expressed at reduced levels in heart, muscle, liver, pituitary, brain and the trigeminal ganglion. The expression of isoform alpha predominates over isoform gamma in the pituitary and the brain.

The protein localises to the nucleus. In terms of biological role, transcriptional regulator. Involved in the initiation of neuronal differentiation. Activates transcription by binding to the E box (5'-CANNTG-3'). May be involved in the functional network that regulates the development of the GnRH axis. This chain is Transcription factor 12 (Tcf12), found in Rattus norvegicus (Rat).